The following is a 514-amino-acid chain: Serine--tRNA ligase, cytoplasmic (514 aa).

The residue at position 1 (M1) is an N-acetylmethionine. The tract at residues 9–61 (RVDKGGDPALIRESQEKRFKDPGLVDQLVKADSEWRRCRFRADNLNKLKNLCS) is interaction with tRNA. Residue S241 is modified to Phosphoserine. 2 residues coordinate L-serine: T271 and R302. Residues 302-304 (RQE) and 318-321 (VHQF) each bind ATP. K323 is subject to N6-acetyllysine. Residue E325 coordinates L-serine. 391 to 394 (ELVS) provides a ligand contact to ATP. Position 427 (N427) interacts with L-serine. The disordered stretch occupies residues 475–514 (PIDQEPSKKQKKQHEGSKKKGAARDVALESQLQNMEVTDA). Basic and acidic residues predominate over residues 479–501 (EPSKKQKKQHEGSKKKGAARDVA). Positions 482-494 (KKQKKQHEGSKKK) match the Nuclear localization signal motif. Residues 504–514 (SQLQNMEVTDA) show a composition bias toward polar residues.

Belongs to the class-II aminoacyl-tRNA synthetase family. Type-1 seryl-tRNA synthetase subfamily. Homodimer. The tRNA molecule may bind across the dimer. Interacts with SIRT2. Interacts with METTL6; interaction is required for the tRNA N(3)-methylcytidine methyltransferase activity of METTL6.

It is found in the cytoplasm. It localises to the nucleus. It catalyses the reaction tRNA(Ser) + L-serine + ATP = L-seryl-tRNA(Ser) + AMP + diphosphate + H(+). It carries out the reaction tRNA(Sec) + L-serine + ATP = L-seryl-tRNA(Sec) + AMP + diphosphate + H(+). It functions in the pathway aminoacyl-tRNA biosynthesis; selenocysteinyl-tRNA(Sec) biosynthesis; L-seryl-tRNA(Sec) from L-serine and tRNA(Sec): step 1/1. Functionally, catalyzes the attachment of serine to tRNA(Ser) in a two-step reaction: serine is first activated by ATP to form Ser-AMP and then transferred to the acceptor end of tRNA(Ser). Is probably also able to aminoacylate tRNA(Sec) with serine, to form the misacylated tRNA L-seryl-tRNA(Sec), which will be further converted into selenocysteinyl-tRNA(Sec). In the nucleus, binds to the VEGFA core promoter and prevents MYC binding and transcriptional activation by MYC. Recruits SIRT2 to the VEGFA promoter, promoting deacetylation of histone H4 at 'Lys-16' (H4K16). Thereby, inhibits the production of VEGFA and sprouting angiogenesis mediated by VEGFA. This is Serine--tRNA ligase, cytoplasmic (SARS1) from Bos taurus (Bovine).